The chain runs to 354 residues: MGCVTSQEDKAAVERSKQIDKSLRMDGEKAAREVKLLLLGAGESGKSTIVKQMKIIHEKGYSQEECLQYNPVVYSNAIQSMIAIIKAMGQLKIQFGHPDRAEEARQFFALAGHADEGEMSQELSGIMKRLWKDVGVQECFSRSREYQLNDSAEYYLNALDRISAPGYIPTEQDVLRTRVKTTGIVETHFTFKDLHFKMFDVGGQRSERKKWIHCFEGVTAIIFIVAMSEYDLTLAEDQEMNRMMESMKLFDSICNNKWFTETSIILFLNKKDLFEEKIKKSPLTICFPEYTGANTYEEAAAYIQLQFENLNKKKDTKEIYSHFTCATDTNNVQFVFDAVTDVIIKNNLKDCGLF.

The N-myristoyl glycine moiety is linked to residue G2. A lipid anchor (S-palmitoyl cysteine) is attached at C3. Positions 32–354 (REVKLLLLGA…KNNLKDCGLF (323 aa)) constitute a G-alpha domain. The segment at 35 to 48 (KLLLLGAGESGKST) is G1 motif. GTP-binding positions include 40–47 (GAGESGKS), 175–181 (LRTRVKT), 200–204 (DVGGQ), 269–272 (NKKD), and A326. Positions 47 and 181 each coordinate Mg(2+). Residues 173–181 (DVLRTRVKT) form a G2 motif region. Positions 196–205 (FKMFDVGGQR) are G3 motif. Residues 265-272 (ILFLNKKD) form a G4 motif region. The interval 324 to 329 (TCATDT) is G5 motif.

The protein belongs to the G-alpha family. G(i/o/t/z) subfamily. G proteins are composed of 3 units; alpha, beta and gamma. The alpha chain contains the guanine nucleotide binding site.

In terms of biological role, guanine nucleotide-binding proteins (G proteins) are involved as modulators or transducers in various transmembrane signaling systems. The polypeptide is Guanine nucleotide-binding protein G(i) subunit alpha (Planorbella trivolvis (Marsh rams-horn)).